The following is a 179-amino-acid chain: ADP-ribosylation factor-like protein 5A (179 aa).

A lipid anchor (N-myristoyl glycine) is attached at Gly-2. Residues 23 to 30 (GLDNAGKT), 66 to 70 (DIGGQ), 125 to 128 (NKQD), and Ala-159 contribute to the GTP site.

It belongs to the small GTPase superfamily. Arf family.

Its function is as follows. Lacks ADP-ribosylation enhancing activity. The protein is ADP-ribosylation factor-like protein 5A (Arl5a) of Mus musculus (Mouse).